The following is a 635-amino-acid chain: Chaperone protein DnaK (635 aa).

A Phosphothreonine; by autocatalysis modification is found at Thr-200. The tract at residues 595 to 635 (KAQPLTEKVQAKSSAENTSKEKSKADDDVVDADFEEVKDDK) is disordered. Basic and acidic residues predominate over residues 612–621 (TSKEKSKADD). Positions 622-635 (DVVDADFEEVKDDK) are enriched in acidic residues.

The protein belongs to the heat shock protein 70 family.

Functionally, acts as a chaperone. The chain is Chaperone protein DnaK from Ruthia magnifica subsp. Calyptogena magnifica.